The sequence spans 857 residues: Cadherin-related family member 1a (857 aa).

An N-terminal signal peptide occupies residues 1-25 (MKNAREIQFSSFLLLAHFCFVGAQS). Residues 26–709 (DYAPYFYDNG…RENPMHFLGL (684 aa)) are Extracellular-facing. Cadherin domains lie at 40–139 (NGNM…RPQF), 140–252 (QNMP…PPIF), 253–359 (IGTP…PPTF), 365–478 (PQNV…APKF), 479–582 (TSDF…PPAF), and 574–693 (DLND…GPLT). A helical transmembrane segment spans residues 710–730 (ISGVILILVFVTVIISTVIFV). The Cytoplasmic portion of the chain corresponds to 731–857 (RRNKANRILP…LEQKNMANRY (127 aa)). The interval 746 to 765 (RKKRKPQKQDDFQEPFREEQ) is disordered. Positions 752 to 765 (QKQDDFQEPFREEQ) are enriched in basic and acidic residues.

Expressed in photoreceptor cells of the outer nuclear layer of the retina and in the pinal gland.

The protein resides in the membrane. Potential calcium-dependent cell-adhesion protein. Plays a role in the organization of retinal cell layers and Muller glia morphology. This chain is Cadherin-related family member 1a, found in Danio rerio (Zebrafish).